A 266-amino-acid chain; its full sequence is Undecaprenyl-diphosphatase (266 aa).

8 consecutive transmembrane segments (helical) span residues 1–21 (MDTLQVIILALIQGLTEFLPI), 39–59 (QGLSFDVAVHIGSLAAVVIYF), 83–103 (SKLAWWIILATIPAIGVGFTA), 111–131 (LRGPGVIAITTVIFGLLLWFA), 149–169 (ALLIGVAQALALIPGTSRSGI), 183–203 (AAARFSFLMSIPVILGAALLM), 218–238 (ALALGSILSFIAAYACIYFFL), and 246–266 (MTPFVIYRIALGVFLCGFIYL).

This sequence belongs to the UppP family.

The protein localises to the cell inner membrane. It carries out the reaction di-trans,octa-cis-undecaprenyl diphosphate + H2O = di-trans,octa-cis-undecaprenyl phosphate + phosphate + H(+). Catalyzes the dephosphorylation of undecaprenyl diphosphate (UPP). Confers resistance to bacitracin. This is Undecaprenyl-diphosphatase from Shewanella amazonensis (strain ATCC BAA-1098 / SB2B).